The chain runs to 1059 residues: Transmembrane protease serine 9 (1059 aa).

The Cytoplasmic segment spans residues 1–29; that stretch reads MEPTVADVHLVPRTTKEVPALDAACCRAA. A helical; Signal-anchor for type II membrane protein transmembrane segment spans residues 30–50; sequence SIGVVATSLVVLTLGVLLAFL. At 51–1059 the chain is on the extracellular side; the sequence is STQGFHVDHT…RGWIGQHIQE (1009 aa). The LDL-receptor class A domain occupies 153-190; the sequence is RCPGNSFSCGNSQCVTKVNPECDDQEDCSDGSDEAHCE. 4 disulfides stabilise this stretch: Cys154–Cys166, Cys161–Cys180, Cys174–Cys189, and Cys228–Cys244. In terms of domain architecture, Peptidase S1 1 spans 203–436; the sequence is IVGGMEASPG…LRDWILEATT (234 aa). Active-site charge relay system residues include His243 and Asp292. Cystine bridges form between Cys326–Cys393, Cys358–Cys372, and Cys383–Cys412. The Charge relay system role is filled by Ser387. The segment at 443–469 is disordered; sequence APTMAPAPAAPSTAWPTSPESPVVSTP. In terms of domain architecture, Peptidase S1 2 spans 504-736; sequence VVGGFGAASG…LKGWILEIMS (233 aa). Cys529 and Cys545 form a disulfide bridge. His544 functions as the Charge relay system in the catalytic mechanism. A glycan (N-linked (GlcNAc...) asparagine) is linked at Asn547. The active-site Charge relay system is Asp592. 3 disulfide bridges follow: Cys626/Cys693, Cys658/Cys672, and Cys683/Cys712. Residues Asn638 and Asn663 are each glycosylated (N-linked (GlcNAc...) asparagine). The Charge relay system role is filled by Ser687. The interval 758–814 is disordered; that stretch reads TTAGLTVPGATPSRPTPGAASRVTGQPANSTLSAVSTTARGQTPFPDAPEATTHTQL. A compositionally biased stretch (polar residues) spans 780-798; it reads VTGQPANSTLSAVSTTARG. Residue Asn786 is glycosylated (N-linked (GlcNAc...) asparagine). The Peptidase S1 3 domain maps to 827-1058; that stretch reads IVGGSAAGRG…VRGWIGQHIQ (232 aa). 4 disulfide bridges follow: Cys853-Cys869, Cys949-Cys1015, Cys980-Cys994, and Cys1005-Cys1034.

Belongs to the peptidase S1 family. In terms of processing, proteolytically cleaved to generate 3 independent serine protease chains. The cleaved chains may remain attached to the membrane thanks to disulfide bonds. It is unclear whether cleavage always takes place. Expressed in fetal human tissues, such as kidney, liver, lung and brain, and in a variety of tumor cell lines. Weakly expressed in adult tissues including skeletal muscle, liver, placenta and heart.

The protein localises to the cell membrane. Its activity is regulated as follows. Inhibited by serine protease inhibitors PMSF and 4-(2-aminoethyl)benzenesulfonyl fluoride, but not by EDTA. Serase-1 and serase-2 are serine proteases that hydrolyze the peptides N-t-Boc-Gln-Ala-Arg-AMC and N-t-Boc-Gln-Gly-Arg-AMC. In contrast, N-t-Boc-Ala-Phe-Lys-AMC and N-t-Boc-Ala-Pro-Ala-AMC are not significantly hydrolyzed. The chain is Transmembrane protease serine 9 (TMPRSS9) from Homo sapiens (Human).